Consider the following 1828-residue polypeptide: Proteasome activator complex subunit 4 (1828 aa).

HEAT repeat units lie at residues 462–506, 985–1024, 1164–1202, 1339–1377, 1621–1659, and 1665–1703; these read PEGP…LVDC, NFCCRDLIPLVLEFLRPERQDVTQQQFKGALYCLLGNHGG, YVLPVRAIRYLVQCLNHDALIVRKMAISTVAGILKQLKR, DAFLPIIKPHLERLVADSHESTQRCAAEIVAGLIRGSKH, PVQVPLVLDVLRQTARSSSWHARYTVLTYIQTMVFYNLF, and EESVQGVRWLILQLMEDEQLEVREMAATTLSGLLQCNFL. The interval 1635–1723 is bromodomain-like (BRDL); sequence ARSSSWHARY…EALCKTRLPK (89 aa).

The protein belongs to the BLM10 family. In terms of assembly, homodimer. Interacts with the 20S and 26S proteasomes.

The protein resides in the cytoplasm. It localises to the cytosol. Its subcellular location is the nucleus. The protein localises to the nucleus speckle. In terms of biological role, associated component of the proteasome that specifically recognizes acetylated histones and promotes ATP- and ubiquitin-independent degradation of core histones during DNA damage response. Recognizes and binds acetylated histones via its bromodomain-like (BRDL) region and activates the proteasome by opening the gated channel for substrate entry. Binds to the core proteasome via its C-terminus, which occupies the same binding sites as the proteasomal ATPases, opening the closed structure of the proteasome via an active gating mechanism. involved in DNA damage response in somatic cells: binds to acetylated histones and promotes degradation of histones. In Xenopus laevis (African clawed frog), this protein is Proteasome activator complex subunit 4 (psme4).